The primary structure comprises 234 residues: Chromatin remodeling protein EBS (234 aa).

Residues Lys29–Arg144 enclose the BAH domain. The PHD-type zinc finger occupies Ala146–Asp197.

This sequence belongs to the SHL1/EBS protein family. As to quaternary structure, recognizes di- and trimethylated histone H3 at lysine 4 (H3K4me2 and H3K4me3). Interacts with HDA6. As to expression, expressed ubiquitously, with higher levels in floral buds.

It is found in the nucleus. Chromatin remodeling factor that binds to methylated histone (e.g. H3K4me2/3) to prevent their acetylation (e.g. H3K9K14Ac), likely by recruiting histone deacetylase (HDAC) complexes, and thus regulating the transcription of target genes. Negative regulator in developmental processes in a gibberellic acid- (GA-) dependent manner, such as germination, flowering induction, and flower organ specification, probably by modulating developmental gene expression. Involved in the chromatin-mediated repression of floral initiation and controls genes regulating flowering. Negatively regulates the expression of the floral integrator FT epigenetically, by preventing high levels of H3 acetylation, thus maintaining an inactive chromatin conformation at FT locus. The protein is Chromatin remodeling protein EBS of Arabidopsis thaliana (Mouse-ear cress).